The chain runs to 297 residues: Mycothiol acetyltransferase (297 aa).

Position 35 (glutamate 35) interacts with 1D-myo-inositol 2-(L-cysteinylamino)-2-deoxy-alpha-D-glucopyranoside. Position 73–75 (73–75 (MLV)) interacts with acetyl-CoA. The 143-residue stretch at 155–297 (LRTFGGTEAE…VAVHAQYGIP (143 aa)) folds into the N-acetyltransferase domain. 1D-myo-inositol 2-(L-cysteinylamino)-2-deoxy-alpha-D-glucopyranoside-binding residues include glutamate 181, lysine 222, and glutamate 230. Acetyl-CoA contacts are provided by residues 234–236 (LGV) and 241–247 (QGRGLGR). Tyrosine 268 provides a ligand contact to 1D-myo-inositol 2-(L-cysteinylamino)-2-deoxy-alpha-D-glucopyranoside.

This sequence belongs to the acetyltransferase family. MshD subfamily. In terms of assembly, monomer.

The catalysed reaction is 1D-myo-inositol 2-(L-cysteinylamino)-2-deoxy-alpha-D-glucopyranoside + acetyl-CoA = mycothiol + CoA + H(+). In terms of biological role, catalyzes the transfer of acetyl from acetyl-CoA to desacetylmycothiol (Cys-GlcN-Ins) to form mycothiol. The sequence is that of Mycothiol acetyltransferase from Beutenbergia cavernae (strain ATCC BAA-8 / DSM 12333 / CCUG 43141 / JCM 11478 / NBRC 16432 / NCIMB 13614 / HKI 0122).